A 211-amino-acid chain; its full sequence is Thymidylate kinase (211 aa).

10–17 lines the ATP pocket; sequence GPDGAGKT.

It belongs to the thymidylate kinase family.

It carries out the reaction dTMP + ATP = dTDP + ADP. In terms of biological role, phosphorylation of dTMP to form dTDP in both de novo and salvage pathways of dTTP synthesis. This is Thymidylate kinase (tmk) from Lactococcus lactis subsp. lactis (strain IL1403) (Streptococcus lactis).